Reading from the N-terminus, the 445-residue chain is Ubiquitin carboxyl-terminal hydrolase 11 (445 aa).

One can recognise a USP domain in the interval 1–412; sequence NSARADLCVA…AAYVLFYQRQ (412 aa). The interval 127 to 194 is disordered; that stretch reads RPSSDDEDDG…GPSHWPQRAR (68 aa). The residue at position 130 (serine 130) is a Phosphoserine. Acidic residues predominate over residues 131-140; that stretch reads DDEDDGDEKD. Histidine 362 functions as the Nucleophile in the catalytic mechanism. The active-site Proton acceptor is histidine 370. The disordered stretch occupies residues 416–445; sequence RRLQPQPSSSDPPASPACGSPPNSEFMDVN. A compositionally biased stretch (low complexity) spans 420 to 439; it reads PQPSSSDPPASPACGSPPNS. Serine 430 bears the Phosphoserine mark.

Belongs to the peptidase C19 family. Monomer. Interacts with RANBP9/RANBPM. Interacts with BRCA2. Interacts with CHUK/IKKA. Interacts with NFKBIA. Associated component of the Polycomb group (PcG) multiprotein PRC1-like complex.

Its subcellular location is the nucleus. The protein resides in the cytoplasm. It localises to the chromosome. It carries out the reaction Thiol-dependent hydrolysis of ester, thioester, amide, peptide and isopeptide bonds formed by the C-terminal Gly of ubiquitin (a 76-residue protein attached to proteins as an intracellular targeting signal).. Functionally, protease that can remove conjugated ubiquitin from target proteins and polyubiquitin chains. Inhibits the degradation of target proteins by the proteasome. Cleaves preferentially 'Lys-6' and 'Lys-63'-linked ubiquitin chains. Has lower activity with 'Lys-11' and 'Lys-33'-linked ubiquitin chains, and extremely low activity with 'Lys-27', 'Lys-29' and 'Lys-48'-linked ubiquitin chains (in vitro). Plays a role in the regulation of pathways leading to NF-kappa-B activation. Plays a role in the regulation of DNA repair after double-stranded DNA breaks. Acts as a chromatin regulator via its association with the Polycomb group (PcG) multiprotein PRC1-like complex; may act by deubiquitinating components of the PRC1-like complex. Promotes cell proliferation by deubiquitinating phosphorylated E2F1. This is Ubiquitin carboxyl-terminal hydrolase 11 (USP11) from Canis lupus familiaris (Dog).